The primary structure comprises 779 residues: Probable ATP-dependent RNA helicase DHX40 (779 aa).

The interval 1-53 (MSRFPAVAGRAPRRQEEGERPVELQEERPSAVRIADREEKGCTSQEGGTTPTF) is disordered. Residues 13–41 (RRQEEGERPVELQEERPSAVRIADREEKG) show a composition bias toward basic and acidic residues. Positions 42–53 (CTSQEGGTTPTF) are enriched in polar residues. The Helicase ATP-binding domain occupies 63–231 (IQAVRDNSFL…FGNCPIFDIP (169 aa)). 76 to 83 (GNTGSGKT) is a binding site for ATP. Positions 173–176 (DEAH) match the DEAH box motif. Positions 263–442 (TMDIHLNEMA…SVVLTLKCLA (180 aa)) constitute a Helicase C-terminal domain.

Belongs to the DEAD box helicase family. DEAH subfamily.

The enzyme catalyses ATP + H2O = ADP + phosphate + H(+). Functionally, probable ATP-dependent RNA helicase. The chain is Probable ATP-dependent RNA helicase DHX40 (Dhx40) from Rattus norvegicus (Rat).